The following is a 186-amino-acid chain: MNTSVIRVVVVSGSLRAPSRTHGLLQALVEKLQARLSNLDVHWVRIAELCSALSGSLERDTASADLQLHLQAIEQADLLLVGSPVYRASYTGLFKHLFDLVDHQSLRGVPVVLAATGGSERHALMIDHQLRPLFAFFQAHTLPYGLYASVEAFDQHHLVEPAQFERIERVLDTVSAFFQIPVASAA.

This sequence belongs to the SsuE family.

The enzyme catalyses FMNH2 + NAD(+) = FMN + NADH + 2 H(+). In terms of biological role, involved in the dimethyl sulfide degradation pathway. Catalyzes the NADH-dependent reduction of FMN. In Pseudomonas putida (Arthrobacter siderocapsulatus), this protein is NADH-dependent FMN reductase SfnF.